Consider the following 336-residue polypeptide: D-alanine--D-alanine ligase (336 aa).

The 207-residue stretch at 124-330 folds into the ATP-grasp domain; the sequence is KMWFSALGVP…FTEYLIDVIG (207 aa). 154–209 serves as a coordination point for ATP; that stretch reads AFDNWGSVFVKAASQGSSVGCYKVDVKANIANVLKDAFSYAPYVVVEQTIHARELE. Residues aspartate 284, glutamate 297, and asparagine 299 each coordinate Mg(2+).

Belongs to the D-alanine--D-alanine ligase family. Mg(2+) serves as cofactor. The cofactor is Mn(2+).

The protein localises to the cytoplasm. The enzyme catalyses 2 D-alanine + ATP = D-alanyl-D-alanine + ADP + phosphate + H(+). Its pathway is cell wall biogenesis; peptidoglycan biosynthesis. Functionally, cell wall formation. In Shewanella frigidimarina (strain NCIMB 400), this protein is D-alanine--D-alanine ligase.